The following is a 466-amino-acid chain: UDP-N-acetylmuramoylalanine--D-glutamate ligase (466 aa).

121–127 (GTNGKST) provides a ligand contact to ATP.

Belongs to the MurCDEF family.

It is found in the cytoplasm. It catalyses the reaction UDP-N-acetyl-alpha-D-muramoyl-L-alanine + D-glutamate + ATP = UDP-N-acetyl-alpha-D-muramoyl-L-alanyl-D-glutamate + ADP + phosphate + H(+). It participates in cell wall biogenesis; peptidoglycan biosynthesis. Functionally, cell wall formation. Catalyzes the addition of glutamate to the nucleotide precursor UDP-N-acetylmuramoyl-L-alanine (UMA). This Rhodopseudomonas palustris (strain HaA2) protein is UDP-N-acetylmuramoylalanine--D-glutamate ligase.